A 417-amino-acid polypeptide reads, in one-letter code: NADH-dependent phenylglyoxylate dehydrogenase subunit alpha (417 aa).

Dimer of heteropentamers composed of an alpha (PadG), a beta (PadI), a gamma (PadE), a delta (PadF) and an epsilon (PadH) subunit.

The catalysed reaction is phenylglyoxylate + NAD(+) + CoA = benzoyl-CoA + CO2 + NADH. With respect to regulation, activated by magnesium ions and thiamine diphosphate. Its function is as follows. Involved in the anaerobic metabolism of phenylalanine and phenylacetate. Catalyzes the oxidative decarboxylation of phenylglyoxylate to benzoyl-CoA and CO(2). It can also react slowly with 2-oxo-3-methylbutanoate and use different electron acceptors such as benzyl viologen, methyl viologen, FAD or FMN, but NAD seems to be the physiological electron acceptor. Also catalyzes an isotope exchange between CO(2) and the carboxyl group which proves partial or complete reversibility of the oxidative decarboxylation reaction. The polypeptide is NADH-dependent phenylglyoxylate dehydrogenase subunit alpha (padG) (Aromatoleum evansii (Azoarcus evansii)).